Reading from the N-terminus, the 575-residue chain is MTIATSSRPRDVQVADIGEHTLILRSRTWERLKFEVEYSRQRGTTANSYLIQADKKALIDPPGESFTAIYLEQLAQYLDFTTLDYIILGHVNPNRRVTLQELLSKAPQATLICSRPAANALKTAFPEWESRIQAVRFEDILDLGQGHQLTFVTAPTPRWPDGLFTYDSATKILYTDKFFGAHICEDTLFDEDWKKLDAERHYYFDCLHAPQAKQVEAALDKVVMLGARSYAPGHGPVVRYSLSRFTYDYRQWCQGQKSQDLNVALLYTSAYGNTGILANAIAQGLVQNDVNVQSVNCELADTAEITRIVEACDGIIIGSPTLGGHAPTQIQTALGIVLSTAAKTKLAGVFGSYGWSGEAIDLIESKLKDANYRLGFDTIRVRFSPTPEILQQCQAAGATFAQTLKKNKKLRTPRQVIPEAKIDRTEQAVGRIIGSLCVVTTRDQESHKGILTSWVSQATFNPPGIMMAIAQEQNADLMSHTGDQFVLNILKEGRNVRRYFSRQSTLGDNPFANLKTKTADNGCLILTEALAYLECTVTNQLECGDRLLIYAVVDKGEVLANDGVTAVEHRKSGSH.

The tract at residues 41–234 (QRGTTANSYL…LGARSYAPGH (194 aa)) is zinc metallo-hydrolase. The region spanning 263 to 405 (VALLYTSAYG…AGATFAQTLK (143 aa)) is the Flavodoxin-like domain. The segment at 429 to 575 (VGRIIGSLCV…AVEHRKSGSH (147 aa)) is flavodoxin-reductase-like.

In the N-terminal section; belongs to the zinc metallo-hydrolase group 3 family. The protein in the C-terminal section; belongs to the flavodoxin reductase family. It depends on Fe cation as a cofactor.

Its function is as follows. Mediates electron transfer from NADH to oxygen, reducing it to water. This modular protein has 3 redox cofactors, in other organisms the same activity requires 2 or 3 proteins. The protein is Putative diflavin flavoprotein A 4 (dfa4) of Nostoc sp. (strain PCC 7120 / SAG 25.82 / UTEX 2576).